A 199-amino-acid polypeptide reads, in one-letter code: Insertion sequence IS21-like putative ATP-binding protein (199 aa).

114–121 (GDSGTGKT) serves as a coordination point for ATP.

It belongs to the IS21/IS1162 putative ATP-binding protein family.

The polypeptide is Insertion sequence IS21-like putative ATP-binding protein (tnpB) (Bacteroides fragilis (strain YCH46)).